A 668-amino-acid polypeptide reads, in one-letter code: tRNA 5-methylaminomethyl-2-thiouridine biosynthesis bifunctional protein MnmC (668 aa).

The interval 1–245 (MKHYSIQPAN…KREMLCGVME (245 aa)) is tRNA (mnm(5)s(2)U34)-methyltransferase. Residues 270–668 (IGGGIACALL…LLKGKAVKAG (399 aa)) are FAD-dependent cmnm(5)s(2)U34 oxidoreductase.

The protein in the N-terminal section; belongs to the methyltransferase superfamily. tRNA (mnm(5)s(2)U34)-methyltransferase family. In the C-terminal section; belongs to the DAO family. It depends on FAD as a cofactor.

It is found in the cytoplasm. It carries out the reaction 5-aminomethyl-2-thiouridine(34) in tRNA + S-adenosyl-L-methionine = 5-methylaminomethyl-2-thiouridine(34) in tRNA + S-adenosyl-L-homocysteine + H(+). Functionally, catalyzes the last two steps in the biosynthesis of 5-methylaminomethyl-2-thiouridine (mnm(5)s(2)U) at the wobble position (U34) in tRNA. Catalyzes the FAD-dependent demodification of cmnm(5)s(2)U34 to nm(5)s(2)U34, followed by the transfer of a methyl group from S-adenosyl-L-methionine to nm(5)s(2)U34, to form mnm(5)s(2)U34. This is tRNA 5-methylaminomethyl-2-thiouridine biosynthesis bifunctional protein MnmC from Shigella boydii serotype 4 (strain Sb227).